Reading from the N-terminus, the 874-residue chain is Alanine--tRNA ligase (874 aa).

Positions 564, 568, 665, and 669 each coordinate Zn(2+).

The protein belongs to the class-II aminoacyl-tRNA synthetase family. It depends on Zn(2+) as a cofactor.

The protein resides in the cytoplasm. The catalysed reaction is tRNA(Ala) + L-alanine + ATP = L-alanyl-tRNA(Ala) + AMP + diphosphate. In terms of biological role, catalyzes the attachment of alanine to tRNA(Ala) in a two-step reaction: alanine is first activated by ATP to form Ala-AMP and then transferred to the acceptor end of tRNA(Ala). Also edits incorrectly charged Ser-tRNA(Ala) and Gly-tRNA(Ala) via its editing domain. This is Alanine--tRNA ligase from Burkholderia cenocepacia (strain HI2424).